Here is a 563-residue protein sequence, read N- to C-terminus: Kdo(2)-lipid A phosphoethanolamine 7''-transferase (563 aa).

The Cytoplasmic portion of the chain corresponds to 1–9 (MRYIKSITQ). The helical transmembrane segment at 10-30 (QKLSFLLAIYIGLFMNGAVFY) threads the bilayer. Residues 31–48 (RRFGSYAHDFTVWKGISA) lie on the Periplasmic side of the membrane. A helical transmembrane segment spans residues 49 to 69 (VVELAATVLVTFFLLRLLSLF). The Cytoplasmic portion of the chain corresponds to 70–79 (GRRSWRILAS). A helical transmembrane segment spans residues 80–100 (LVVLFSAGASYYMTFLNVVIG). Residues 101-117 (YGIIASVMTTDIDLSKE) lie on the Periplasmic side of the membrane. Residues 118–138 (VVGLNFILWLIAVSALPLILI) form a helical membrane-spanning segment. Residues 139 to 159 (WNNRCRYTLLRQLRTPGQRIR) lie on the Cytoplasmic side of the membrane. The helical transmembrane segment at 160-180 (SLAVVVLAGIMVWAPIRLLDI) threads the bilayer. Topologically, residues 181-563 (QQKKVERATG…IPQAKEAAAN (383 aa)) are periplasmic.

The protein belongs to the phosphoethanolamine transferase family. EptB subfamily. Requires Ca(2+) as cofactor.

Its subcellular location is the cell inner membrane. The enzyme catalyses alpha-Kdo-(2-&gt;4)-alpha-Kdo-(2-&gt;6)-lipid A (E. coli) + a 1,2-diacyl-sn-glycero-3-phosphoethanolamine = 7-O-[2-aminoethoxy(hydroxy)phosphoryl]-alpha-Kdo-(2-&gt;4)-alpha-Kdo-(2-&gt;6)-lipid A + a 1,2-diacyl-sn-glycerol. It catalyses the reaction alpha-Kdo-(2-&gt;4)-alpha-Kdo-(2-&gt;6)-lipid IVA (E. coli) + a 1,2-diacyl-sn-glycero-3-phosphoethanolamine = 7-O-[2-aminoethoxy(hydroxy)phosphoryl]-alpha-Kdo-(2-&gt;4)-alpha-Kdo-(2-&gt;6)-lipid IVA (E. coli) + a 1,2-diacyl-sn-glycerol. Its activity is regulated as follows. Inhibited by calcium concentrations higher than 1 mM. In terms of biological role, catalyzes the addition of a phosphoethanolamine (pEtN) moiety to the outer 3-deoxy-D-manno-octulosonic acid (Kdo) residue of a Kdo(2)-lipid A. Phosphatidylethanolamines with one unsaturated acyl group function as pEtN donors and the reaction releases diacylglycerol. This is Kdo(2)-lipid A phosphoethanolamine 7''-transferase (eptB) from Escherichia coli (strain K12).